An 895-amino-acid chain; its full sequence is uncharacterized protein (895 aa).

The segment at 257-283 (KSHKYPPGPPDNSSSNTSGQQNTSNTS) is disordered. The span at 268–283 (NSSSNTSGQQNTSNTS) shows a compositional bias: low complexity.

This is an uncharacterized protein from Acanthamoeba polyphaga mimivirus (APMV).